Reading from the N-terminus, the 755-residue chain is Polycomb protein SUZ12 (755 aa).

Disordered regions lie at residues 26–79 (KMGN…RRIS), 333–377 (NANG…SRRA), and 392–420 (AVGRETRNNSNKRRRGGAYGEDHPPSDDR). Low complexity predominate over residues 30–42 (KASSQAQKRSQSQ). 2 stretches are compositionally biased toward polar residues: residues 43-57 (TGDSATSRPATDGSG) and 349-359 (TQPNGTHNEGT). Basic and acidic residues predominate over residues 411-420 (GEDHPPSDDR). Residues 436-458 (FACLICGAENERLSQLRAHYMCH) form a C2H2-type zinc finger. The interval 580–645 (IDDSWLLLKH…KADWLVSKRS (66 aa)) is polycomb protein VEFS-Box.

Belongs to the VEFS (VRN2-EMF2-FIS2-SU(Z)12) family. Component of the polycomb repressive complex 2 (PRC2) that consists of four core subunits icluding EZH2, EED, SUZ12, and RBBP4, among which EZH2 is the catalytic subunit and which minimally requires EED and SUZ12 for catalysis.

Its subcellular location is the nucleus. In terms of biological role, component of the of the Polycomb Repressive Complex 2 (PRC2), a histone H3 lysine methyltransferase responsible for generating mono-, di-, and tri-methylation on Lys27 (H3K27me1, H3K27me2 and H3K27me3). The tri-methylated form is known to be critical in gene repression, and its proper placement is essential in defining repression patterns during development. SUZ12 is not a catalytic subunit but is required for the complex regulation of histone H3 lysine methylation by EZH2. This chain is Polycomb protein SUZ12, found in Chaetomium thermophilum (strain DSM 1495 / CBS 144.50 / IMI 039719) (Thermochaetoides thermophila).